We begin with the raw amino-acid sequence, 256 residues long: Protein FixA (256 aa).

Belongs to the ETF beta-subunit/FixA family. As to quaternary structure, heterodimer of FixA and FixB.

It functions in the pathway amine and polyamine metabolism; carnitine metabolism. Required for anaerobic carnitine reduction. May bring reductant to CaiA. The chain is Protein FixA from Shigella flexneri serotype 5b (strain 8401).